Here is a 471-residue protein sequence, read N- to C-terminus: Ubiquitin carboxyl-terminal hydrolase calypso (471 aa).

The UCH catalytic domain maps to 45–276; sequence GWLELESDPG…IRFNLMAVVP (232 aa). Cys131 (nucleophile) is an active-site residue. The active-site Proton donor is His213. The ULD domain maps to 375-403; the sequence is NYDKFICTFLSMLAHQGVLGELVSQHLLP. The segment at 405–471 is positively charged C-terminal tail required for binding nucleosomes; sequence KKVSGQGAAN…KGRNKCRKRK (67 aa). A disordered region spans residues 410–471; that stretch reads QGAANRISKQ…KGRNKCRKRK (62 aa). Residues 420–447 are compositionally biased toward low complexity; that stretch reads STTASAGGSTTGATASTPKTQQQQAAAA. Residues 457-471 show a composition bias toward basic residues; sequence PGRRRKGRNKCRKRK.

It belongs to the peptidase C12 family. BAP1 subfamily. Catalytic component of the polycomb repressive deubiquitinase (PR-DUB) complex, at least composed of caly/calypso, Asx and sba (MBD5/6 homolog). The PR-DUB complex associates with nucleosomes to mediate deubiquitination of histone H2AK118ub1 substrates; the association requires the positively charged C-terminal tail of caly, probably due to direct binding of DNA. Interacts (via ULD domain) with Asx (via DEUBAD domain); the interaction produces a stable heterodimer with a composite binding site for ubiquitin. Homodimerizes (via coiled-coil hinge-region between the UCH and ULD domains) to mediate assembly of 2 copies of the caly-Asx heterodimer into a bisymmetric tetramer; dimerization enhances PR-DUB association with nucleosomes.

Its subcellular location is the nucleus. The catalysed reaction is Thiol-dependent hydrolysis of ester, thioester, amide, peptide and isopeptide bonds formed by the C-terminal Gly of ubiquitin (a 76-residue protein attached to proteins as an intracellular targeting signal).. Its function is as follows. Catalytic component of the polycomb repressive deubiquitinase (PR-DUB) complex, a complex that specifically mediates deubiquitination of histone H2A monoubiquitinated at 'Lys-119' (H2AK118ub1). Mediates bisymmetric organization of the PR-DUB complex and is involved in association with nucleosomes to mediate deubiquitination. Does not deubiquitinate monoubiquitinated histone H2B. Required to maintain the transcriptionally repressive state of homeotic genes throughout development. The PR-DUB complex has weak or no activity toward 'Lys-48'- and 'Lys-63'-linked polyubiquitin chains. Polycomb group (PcG) protein. The sequence is that of Ubiquitin carboxyl-terminal hydrolase calypso from Drosophila yakuba (Fruit fly).